We begin with the raw amino-acid sequence, 936 residues long: Sine oculis-binding protein homolog A (936 aa).

Basic and acidic residues predominate over residues 1-14 (MAEMEKEGRPPESK). Disordered stretches follow at residues 1–46 (MAEM…GQAG) and 108–151 (ASTL…HGGL). A compositionally biased stretch (polar residues) spans 108 to 144 (ASTLENSSGSPPHANSSGSTPTSRNGVTAESSVNPSS). 2 consecutive FCS-type zinc fingers follow at residues 169 to 207 (EDSS…KCFA) and 247 to 287 (LKTN…KCLN). Disordered regions lie at residues 311–330 (LPTS…LTPE), 336–424 (LSEL…VMTP), 486–511 (SPHL…HPAA), 574–632 (NPQR…KQTE), 697–727 (PPPA…DTYS), and 842–877 (DSAG…EDHA). Positions 349–382 (GATIAGPSGSTSGSPSEAGTVCSSSSSSSSSSSS) are enriched in low complexity. Pro residues predominate over residues 395–404 (SLPPPHPPPI). Composition is skewed to polar residues over residues 617 to 632 (PPNS…KQTE), 708 to 717 (DGSTSISTGT), and 850 to 859 (NDQSAITTGT).

It belongs to the SOBP family.

In terms of biological role, implicated in development of the cochlea. The sequence is that of Sine oculis-binding protein homolog A (sobpa) from Danio rerio (Zebrafish).